A 403-amino-acid chain; its full sequence is Na(+)-translocating NADH-quinone reductase subunit B (403 aa).

Transmembrane regions (helical) follow at residues 56-76 (MMII…YNVG), 121-141 (AYFL…EVLF), 164-184 (LPPS…VVLG), 225-245 (GFAG…NILG), 260-280 (GSMG…LLLT), 287-307 (IVAG…AIGS), 312-332 (MFAM…GMIF), 348-368 (WLFG…NPAF), and 371-391 (GMML…HFVV). An FMN phosphoryl threonine modification is found at Thr230.

It belongs to the NqrB/RnfD family. Composed of six subunits; NqrA, NqrB, NqrC, NqrD, NqrE and NqrF. FMN serves as cofactor.

Its subcellular location is the cell inner membrane. The catalysed reaction is a ubiquinone + n Na(+)(in) + NADH + H(+) = a ubiquinol + n Na(+)(out) + NAD(+). Its function is as follows. NQR complex catalyzes the reduction of ubiquinone-1 to ubiquinol by two successive reactions, coupled with the transport of Na(+) ions from the cytoplasm to the periplasm. NqrA to NqrE are probably involved in the second step, the conversion of ubisemiquinone to ubiquinol. The chain is Na(+)-translocating NADH-quinone reductase subunit B from Pseudomonas aeruginosa (strain LESB58).